The primary structure comprises 61 residues: Probable tautomerase lin2709 (61 aa).

The Proton acceptor; via imino nitrogen role is filled by Pro2.

This sequence belongs to the 4-oxalocrotonate tautomerase family.

This Listeria innocua serovar 6a (strain ATCC BAA-680 / CLIP 11262) protein is Probable tautomerase lin2709.